A 534-amino-acid chain; its full sequence is Cytidylyl-2-hydroxyethylphosphonate methyltransferase (534 aa).

Positions K38–D195 constitute a B12-binding domain. The 229-residue stretch at T268–P496 folds into the Radical SAM core domain. Residues C282, C286, and C289 each coordinate [4Fe-4S] cluster.

Belongs to the radical SAM superfamily. Requires [4Fe-4S] cluster as cofactor. Methylcob(III)alamin is required as a cofactor.

It catalyses the reaction cytidine 5'-{[hydroxy(2-hydroxyethyl)phosphonoyl]phosphate} + AH2 + 2 S-adenosyl-L-methionine = cytidine 5'-({hydroxy[(S)-2-hydroxypropyl]phosphonoyl}phosphate) + 5'-deoxyadenosine + L-methionine + A + S-adenosyl-L-homocysteine + 2 H(+). Its pathway is antibiotic biosynthesis; fosfomycin biosynthesis. Functionally, involved in fosfomycin biosynthesis. Catalyzes the C-methylation of cytidylyl-2-hydroxyethylphosphonate (HEP-CMP) to form cytidylyl-2-hydroxypropylphosphonate (HPP-CMP). The C-methylation is not stereoselective and the ratio of (S)- to (R)-HPP-CMP is almost equal in vitro. This Streptomyces wedmorensis protein is Cytidylyl-2-hydroxyethylphosphonate methyltransferase.